The chain runs to 23 residues: Alyteserin-1d (23 aa).

Asn23 bears the Asparagine amide mark.

In terms of tissue distribution, expressed by the skin glands.

The protein localises to the secreted. It localises to the target cell membrane. Functionally, antibacterial peptide with amphipathic alpha-helical structure. Shows selective growth inhibitory activity against the Gram-negative bacteria E.coli (MIC=25 uM) Has a weak hemolytic activity against human erythrocytes (LC(50)&gt;100 uM). Is very weakly active against S.aureus (MIC=200 uM). The chain is Alyteserin-1d from Alytes obstetricans (Common midwife toad).